Here is a 344-residue protein sequence, read N- to C-terminus: Dihydroorotase (344 aa).

His-13 and His-15 together coordinate Zn(2+). Residues 15 to 17 (HLR) and Asn-41 contribute to the substrate site. Zn(2+) contacts are provided by Lys-99, His-136, and His-174. Lys-99 is subject to N6-carboxylysine. Substrate is bound at residue His-136. Leu-219 serves as a coordination point for substrate. Asp-247 lines the Zn(2+) pocket. Asp-247 is an active-site residue. His-251 and Ala-263 together coordinate substrate.

This sequence belongs to the metallo-dependent hydrolases superfamily. DHOase family. Class II DHOase subfamily. In terms of assembly, homodimer. It depends on Zn(2+) as a cofactor.

The catalysed reaction is (S)-dihydroorotate + H2O = N-carbamoyl-L-aspartate + H(+). Its pathway is pyrimidine metabolism; UMP biosynthesis via de novo pathway; (S)-dihydroorotate from bicarbonate: step 3/3. Its function is as follows. Catalyzes the reversible cyclization of carbamoyl aspartate to dihydroorotate. The protein is Dihydroorotase of Acinetobacter baumannii (strain SDF).